A 574-amino-acid polypeptide reads, in one-letter code: Proline--tRNA ligase (574 aa).

Belongs to the class-II aminoacyl-tRNA synthetase family. ProS type 1 subfamily. In terms of assembly, homodimer.

The protein localises to the cytoplasm. It carries out the reaction tRNA(Pro) + L-proline + ATP = L-prolyl-tRNA(Pro) + AMP + diphosphate. Its function is as follows. Catalyzes the attachment of proline to tRNA(Pro) in a two-step reaction: proline is first activated by ATP to form Pro-AMP and then transferred to the acceptor end of tRNA(Pro). As ProRS can inadvertently accommodate and process non-cognate amino acids such as alanine and cysteine, to avoid such errors it has two additional distinct editing activities against alanine. One activity is designated as 'pretransfer' editing and involves the tRNA(Pro)-independent hydrolysis of activated Ala-AMP. The other activity is designated 'posttransfer' editing and involves deacylation of mischarged Ala-tRNA(Pro). The misacylated Cys-tRNA(Pro) is not edited by ProRS. This is Proline--tRNA ligase from Nitrosococcus oceani (strain ATCC 19707 / BCRC 17464 / JCM 30415 / NCIMB 11848 / C-107).